Reading from the N-terminus, the 595-residue chain is NADH-quinone oxidoreductase subunit C/D (595 aa).

The tract at residues 1–185 (MTDLTAQAAC…DPFELTKAKQ (185 aa)) is NADH dehydrogenase I subunit C. The interval 209–595 (DFMFLNLGPN…IDFVMSDVDR (387 aa)) is NADH dehydrogenase I subunit D.

In the N-terminal section; belongs to the complex I 30 kDa subunit family. This sequence in the C-terminal section; belongs to the complex I 49 kDa subunit family. In terms of assembly, NDH-1 is composed of 13 different subunits. Subunits NuoB, CD, E, F, and G constitute the peripheral sector of the complex.

Its subcellular location is the cell inner membrane. The enzyme catalyses a quinone + NADH + 5 H(+)(in) = a quinol + NAD(+) + 4 H(+)(out). NDH-1 shuttles electrons from NADH, via FMN and iron-sulfur (Fe-S) centers, to quinones in the respiratory chain. The immediate electron acceptor for the enzyme in this species is believed to be ubiquinone. Couples the redox reaction to proton translocation (for every two electrons transferred, four hydrogen ions are translocated across the cytoplasmic membrane), and thus conserves the redox energy in a proton gradient. This is NADH-quinone oxidoreductase subunit C/D from Enterobacter sp. (strain 638).